A 166-amino-acid chain; its full sequence is uncharacterized protein (166 aa).

Basic and acidic residues-rich tracts occupy residues Met1–Ser13, Lys21–Glu112, and Asp119–Gly137. The interval Met1–Thr144 is disordered. Repeat copies occupy residues Asp31–Lys41, Asp42–Lys52, Asp53–Lys63, Asp64–Lys74, Asp75–Lys85, Asp86–Lys96, Asp97–Lys107, and Asp108–Arg118. The tract at residues Asp31–Arg118 is 8 X 11 AA approximate tandem repeats of D-K-T-K-E-T-A-G/E-S-A-K.

Belongs to the LEA type 1 family.

This is an uncharacterized protein from Encephalitozoon cuniculi (strain GB-M1) (Microsporidian parasite).